We begin with the raw amino-acid sequence, 185 residues long: Ribosome-recycling factor (185 aa).

The protein belongs to the RRF family.

It is found in the cytoplasm. In terms of biological role, responsible for the release of ribosomes from messenger RNA at the termination of protein biosynthesis. May increase the efficiency of translation by recycling ribosomes from one round of translation to another. This Nocardia farcinica (strain IFM 10152) protein is Ribosome-recycling factor.